Consider the following 319-residue polypeptide: 7-methylguanosine phosphate-specific 5'-nucleotidase (319 aa).

The active-site Nucleophile is the D55. Mg(2+)-binding residues include D55 and D57. The Proton donor role is filled by D57. E103 is a binding site for CMP. N(7)-methyl-GMP contacts are provided by E103 and S124. 171-172 (SA) serves as a coordination point for substrate. Residue D245 coordinates Mg(2+).

Belongs to the pyrimidine 5'-nucleotidase family. Monomer. Mg(2+) serves as cofactor.

It carries out the reaction N(7)-methyl-GMP + H2O = N(7)-methylguanosine + phosphate. The enzyme catalyses CMP + H2O = cytidine + phosphate. The catalysed reaction is a ribonucleoside 5'-phosphate + H2O = a ribonucleoside + phosphate. With respect to regulation, inhibited by high levels of AMP. Its function is as follows. Specifically hydrolyzes 7-methylguanosine monophosphate (m(7)GMP) to 7-methylguanosine and inorganic phosphate. Also able to mediate hydrolysis of diphosphate (m(7)GDP) to 7-methylguanosine and 2 inorganic phosphate with lower activity. The specific activity for m(7)GMP may protect cells against undesired salvage of m(7)GMP and its incorporation into nucleic acids. Also has weak activity for CMP. UMP and purine nucleotides are poor substrates. The sequence is that of 7-methylguanosine phosphate-specific 5'-nucleotidase from Drosophila melanogaster (Fruit fly).